Reading from the N-terminus, the 1427-residue chain is DNA-directed RNA polymerase subunit beta' (1427 aa).

The Zn(2+) site is built by Cys-70, Cys-72, Cys-85, and Cys-88. The Mg(2+) site is built by Asp-461, Asp-463, and Asp-465. 4 residues coordinate Zn(2+): Cys-810, Cys-884, Cys-891, and Cys-894. 2 disordered regions span residues 1044-1065 (QTDE…AGRG) and 1394-1427 (PEAA…GDEA).

It belongs to the RNA polymerase beta' chain family. The RNAP catalytic core consists of 2 alpha, 1 beta, 1 beta' and 1 omega subunit. When a sigma factor is associated with the core the holoenzyme is formed, which can initiate transcription. Requires Mg(2+) as cofactor. Zn(2+) is required as a cofactor.

It carries out the reaction RNA(n) + a ribonucleoside 5'-triphosphate = RNA(n+1) + diphosphate. Functionally, DNA-dependent RNA polymerase catalyzes the transcription of DNA into RNA using the four ribonucleoside triphosphates as substrates. The chain is DNA-directed RNA polymerase subunit beta' from Novosphingobium aromaticivorans (strain ATCC 700278 / DSM 12444 / CCUG 56034 / CIP 105152 / NBRC 16084 / F199).